The following is a 609-amino-acid chain: Thiamine metabolism regulatory protein THI3 (609 aa).

The segment at 578–598 (SKQVQEENENSSAVNTPTPEF) is disordered.

It belongs to the TPP enzyme family. Mg(2+) serves as cofactor. Thiamine diphosphate is required as a cofactor.

Its subcellular location is the nucleus. The catalysed reaction is 4-methyl-2-oxopentanoate + H(+) = 3-methylbutanal + CO2. It catalyses the reaction (S)-3-methyl-2-oxopentanoate + H(+) = 2-methylbutanal + CO2. Its pathway is amino-acid degradation; Ehrlich pathway. One of five 2-oxo acid decarboxylases (PDC1, PDC5, PDC6, ARO10, and THI3) involved in amino acid catabolism. The enzyme catalyzes the decarboxylation of amino acids, which, in a first step, have been transaminated to the corresponding 2-oxo acids (alpha-keto-acids). In a third step, the resulting aldehydes are reduced to alcohols, collectively referred to as fusel oils or alcohols. Its preferred substrates are the transaminated amino acids derived from leucine (4-methyl-2-oxopentanoate, also alpha-keto-isocaproate) and isoleucine ((3S)-3-methyl-2-oxopentanoate, also alpha-keto-beta-methylvalerate), whereas transaminated valine, transaminated aromatic amino acids, and pyruvate are no substrates. In analogy to the pyruvate decarboxylases the enzyme may in a side-reaction catalyze condensation (or carboligation) reactions leading to the formation of 2-hydroxy ketone, collectively called acyloins. The enzyme is also positively regulating the thiamine metabolism by a molecular mechanism that may involve thiamine concentration sensing and signal transmission. In Saccharomyces cerevisiae (strain ATCC 204508 / S288c) (Baker's yeast), this protein is Thiamine metabolism regulatory protein THI3 (THI3).